The sequence spans 203 residues: Holliday junction branch migration complex subunit RuvA (203 aa).

Positions methionine 1–leucine 63 are domain I. The domain II stretch occupies residues threonine 64–lysine 142. The tract at residues glutamate 143 to asparagine 149 is flexible linker. The interval isoleucine 150–phenylalanine 203 is domain III.

It belongs to the RuvA family. As to quaternary structure, homotetramer. Forms an RuvA(8)-RuvB(12)-Holliday junction (HJ) complex. HJ DNA is sandwiched between 2 RuvA tetramers; dsDNA enters through RuvA and exits via RuvB. An RuvB hexamer assembles on each DNA strand where it exits the tetramer. Each RuvB hexamer is contacted by two RuvA subunits (via domain III) on 2 adjacent RuvB subunits; this complex drives branch migration. In the full resolvosome a probable DNA-RuvA(4)-RuvB(12)-RuvC(2) complex forms which resolves the HJ.

Its subcellular location is the cytoplasm. In terms of biological role, the RuvA-RuvB-RuvC complex processes Holliday junction (HJ) DNA during genetic recombination and DNA repair, while the RuvA-RuvB complex plays an important role in the rescue of blocked DNA replication forks via replication fork reversal (RFR). RuvA specifically binds to HJ cruciform DNA, conferring on it an open structure. The RuvB hexamer acts as an ATP-dependent pump, pulling dsDNA into and through the RuvAB complex. HJ branch migration allows RuvC to scan DNA until it finds its consensus sequence, where it cleaves and resolves the cruciform DNA. The sequence is that of Holliday junction branch migration complex subunit RuvA from Rickettsia peacockii (strain Rustic).